Here is a 299-residue protein sequence, read N- to C-terminus: Cysteine synthase B (299 aa).

At lysine 40 the chain carries N6-(pyridoxal phosphate)lysine. Residues asparagine 70, 174–178 (GTGGT), and serine 261 contribute to the pyridoxal 5'-phosphate site.

This sequence belongs to the cysteine synthase/cystathionine beta-synthase family. Pyridoxal 5'-phosphate is required as a cofactor.

The enzyme catalyses O-acetyl-L-serine + hydrogen sulfide = L-cysteine + acetate. It participates in amino-acid biosynthesis; L-cysteine biosynthesis; L-cysteine from L-serine: step 2/2. This is Cysteine synthase B (cysM) from Campylobacter jejuni subsp. jejuni serotype O:2 (strain ATCC 700819 / NCTC 11168).